The chain runs to 184 residues: Ribosome-recycling factor (184 aa).

It belongs to the RRF family.

It localises to the cytoplasm. Functionally, responsible for the release of ribosomes from messenger RNA at the termination of protein biosynthesis. May increase the efficiency of translation by recycling ribosomes from one round of translation to another. The protein is Ribosome-recycling factor of Borrelia turicatae (strain 91E135).